The chain runs to 355 residues: Anthranilate phosphoribosyltransferase (355 aa).

Residues G99, 102–103 (GD), T107, 109–112 (NIST), 127–135 (KHGNRSVSS), and S139 contribute to the 5-phospho-alpha-D-ribose 1-diphosphate site. G99 is an anthranilate binding site. Residue S111 participates in Mg(2+) binding. N130 is a binding site for anthranilate. Residue R185 participates in anthranilate binding. The Mg(2+) site is built by D243 and E244.

Belongs to the anthranilate phosphoribosyltransferase family. Homodimer. It depends on Mg(2+) as a cofactor.

It catalyses the reaction N-(5-phospho-beta-D-ribosyl)anthranilate + diphosphate = 5-phospho-alpha-D-ribose 1-diphosphate + anthranilate. It participates in amino-acid biosynthesis; L-tryptophan biosynthesis; L-tryptophan from chorismate: step 2/5. Its function is as follows. Catalyzes the transfer of the phosphoribosyl group of 5-phosphorylribose-1-pyrophosphate (PRPP) to anthranilate to yield N-(5'-phosphoribosyl)-anthranilate (PRA). This Pseudoalteromonas translucida (strain TAC 125) protein is Anthranilate phosphoribosyltransferase.